The following is a 227-amino-acid chain: Enolase-phosphatase E1 (227 aa).

Residues Asp-11 and Glu-13 each contribute to the Mg(2+) site. Substrate-binding positions include 118–119 and Lys-161; that span reads SS. Asp-186 is a Mg(2+) binding site.

The protein belongs to the HAD-like hydrolase superfamily. MasA/MtnC family. Monomer. Mg(2+) is required as a cofactor.

Its subcellular location is the cytoplasm. The protein localises to the nucleus. It catalyses the reaction 5-methylsulfanyl-2,3-dioxopentyl phosphate + H2O = 1,2-dihydroxy-5-(methylsulfanyl)pent-1-en-3-one + phosphate. It functions in the pathway amino-acid biosynthesis; L-methionine biosynthesis via salvage pathway; L-methionine from S-methyl-5-thio-alpha-D-ribose 1-phosphate: step 3/6. It participates in amino-acid biosynthesis; L-methionine biosynthesis via salvage pathway; L-methionine from S-methyl-5-thio-alpha-D-ribose 1-phosphate: step 4/6. Its function is as follows. Bifunctional enzyme that catalyzes the enolization of 2,3-diketo-5-methylthiopentyl-1-phosphate (DK-MTP-1-P) into the intermediate 2-hydroxy-3-keto-5-methylthiopentenyl-1-phosphate (HK-MTPenyl-1-P), which is then dephosphorylated to form the acireductone 1,2-dihydroxy-3-keto-5-methylthiopentene (DHK-MTPene). This Saccharomyces cerevisiae (strain ATCC 204508 / S288c) (Baker's yeast) protein is Enolase-phosphatase E1.